A 127-amino-acid polypeptide reads, in one-letter code: Ribosome-binding factor A (127 aa).

The protein belongs to the RbfA family. In terms of assembly, monomer. Binds 30S ribosomal subunits, but not 50S ribosomal subunits or 70S ribosomes.

The protein localises to the cytoplasm. In terms of biological role, one of several proteins that assist in the late maturation steps of the functional core of the 30S ribosomal subunit. Associates with free 30S ribosomal subunits (but not with 30S subunits that are part of 70S ribosomes or polysomes). Required for efficient processing of 16S rRNA. May interact with the 5'-terminal helix region of 16S rRNA. The protein is Ribosome-binding factor A of Glaesserella parasuis serovar 5 (strain SH0165) (Haemophilus parasuis).